The sequence spans 130 residues: Small ribosomal subunit protein uS11 (130 aa).

This sequence belongs to the universal ribosomal protein uS11 family. As to quaternary structure, part of the 30S ribosomal subunit. Interacts with proteins S7 and S18. Binds to IF-3.

Functionally, located on the platform of the 30S subunit, it bridges several disparate RNA helices of the 16S rRNA. Forms part of the Shine-Dalgarno cleft in the 70S ribosome. This is Small ribosomal subunit protein uS11 from Psychrobacter sp. (strain PRwf-1).